A 368-amino-acid chain; its full sequence is Protein mab-21-like 3 (368 aa).

The protein belongs to the mab-21 family.

In Xenopus laevis (African clawed frog), this protein is Protein mab-21-like 3 (mab21L3).